Here is a 443-residue protein sequence, read N- to C-terminus: Diels-Alderase poxQ (443 aa).

Positions 1–23 are cleaved as a signal peptide; sequence MARIPLEFLSITLPVLLLAYCLA. N-linked (GlcNAc...) asparagine glycans are attached at residues Asn78, Asn97, and Asn145.

It belongs to the Diels-Alderase family.

The protein operates within secondary metabolite biosynthesis. In terms of biological role, diels-Alderase; part of the gene cluster that mediates the biosynthesis of oxaleimides, cytotoxic compounds containing an unusual disubstituted succinimide moiety. The first step of the pathway is provided by the HR-PKS poxF that serves in a new mode of collaborative biosynthesis with the PKS-NRPS poxE, by providing the olefin containing amino acid substrate via the synthesis of an ACP-bound dec-4-enoate. The cytochrome P450 monooxygenase poxM-catalyzed oxidation at the alpha-position creates the enzyme-bound 2-hydroxydec-4-enoyl-ACP thioester, which may be prone to spontaneous hydrolysis to yield 2-hydroxydec-4-enoic acid due to increased electrophilicity of the carbonyl. 2-hydroxydec-4-enoic acid can then be further oxidized by poxM to yield the alpha-ketoacid 2-oxodec-4-enoicacid, which is reductively aminated by the aminotransferase poxL to yield (S,E)-2-aminodec-4-enoic acid. The Hybrid PKS-NRPS synthetase poxE then performs condensation between the octaketide product of its PKS modules and the amino group of (S,E)-2-aminodec-4-enoic acid which is activated and incorporated by the adenylation domain. The resulting aminoacyl product can be cyclized by the Diels-Alderase PoxQ and reductively released by the reductive (R) domain of poxE to yield an aldehyde intermediate. The released aldehyde is then substrate for a Knoevenagel condensation by the hydrolyase poxO followed by an oxidation at the 5-position of the pyrrolidone ring. The presence of the olefin from the amino acid building block allows for migration of the substituted allyl group to occur. This allylic transposition reaction takes place in a conjugate addition, semipinacol-like fashion to yield a succinimide intermediate. Iterative two-electron oxidations of the C7 methyl of the succinimide intermediate to the carboxylic acid can be catalyzed by one of two remaining cytochrome P450 monooxygenasess poxC or poxD to yield oxaleimide A. Subsequent oxidation yields the maleimide scaffold oxaleimide I. Both oxaleimide A and oxaleimide I can undergo oxidative modifications in the decalin ring to yield the series of products oxaleimides B to H. The protein is Diels-Alderase poxQ of Penicillium oxalicum.